Reading from the N-terminus, the 183-residue chain is Large ribosomal subunit protein uL5 (183 aa).

This sequence belongs to the universal ribosomal protein uL5 family. Part of the 50S ribosomal subunit; part of the 5S rRNA/L5/L18/L25 subcomplex. Contacts the 5S rRNA and the P site tRNA. Forms a bridge to the 30S subunit in the 70S ribosome.

Functionally, this is one of the proteins that bind and probably mediate the attachment of the 5S RNA into the large ribosomal subunit, where it forms part of the central protuberance. In the 70S ribosome it contacts protein S13 of the 30S subunit (bridge B1b), connecting the 2 subunits; this bridge is implicated in subunit movement. Contacts the P site tRNA; the 5S rRNA and some of its associated proteins might help stabilize positioning of ribosome-bound tRNAs. The chain is Large ribosomal subunit protein uL5 from Corynebacterium aurimucosum (strain ATCC 700975 / DSM 44827 / CIP 107346 / CN-1) (Corynebacterium nigricans).